The following is a 215-amino-acid chain: Riboflavin synthase (215 aa).

2 Lumazine-binding repeats span residues 1–96 (MFTG…FGGH) and 97–193 (FVSG…YRFL). 2,4-dihydroxypteridine-binding positions include 4–6 (GII), 47–49 (CLT), 61–66 (DVMPET), 100–102 (GHV), Lys135, 144–146 (SLT), and 158–163 (SLIPHT).

Homotrimer. Can interact with 6,7-dimethyl-8-ribityllumazine synthase, forming a lumazine synthase/riboflavin synthase complex, also designated as 'heavy riboflavin synthase complex', which consists of a trimer of riboflavin synthase enclosed within an icosahedral structure composed of 60 subunits of 6,7-dimethyl-8-ribityllumazine synthase.

It carries out the reaction 2 6,7-dimethyl-8-(1-D-ribityl)lumazine + H(+) = 5-amino-6-(D-ribitylamino)uracil + riboflavin. It functions in the pathway cofactor biosynthesis; riboflavin biosynthesis; riboflavin from 2-hydroxy-3-oxobutyl phosphate and 5-amino-6-(D-ribitylamino)uracil: step 2/2. With respect to regulation, is activated by sulfite ions. Functionally, catalyzes the dismutation of two molecules of 6,7-dimethyl-8-ribityllumazine, resulting in the formation of riboflavin and 5-amino-6-(D-ribitylamino)uracil. This Bacillus subtilis (strain 168) protein is Riboflavin synthase (ribE).